Reading from the N-terminus, the 434-residue chain is 3-phosphoshikimate 1-carboxyvinyltransferase (434 aa).

Residues Lys22, Ser23, and Arg27 each coordinate 3-phosphoshikimate. Lys22 contributes to the phosphoenolpyruvate binding site. Residues Gly93 and Arg121 each contribute to the phosphoenolpyruvate site. 3-phosphoshikimate contacts are provided by Ser168, Ser169, Gln170, Ser199, Asp320, and Lys347. Gln170 contacts phosphoenolpyruvate. The active-site Proton acceptor is Asp320. 3 residues coordinate phosphoenolpyruvate: Arg351, Arg394, and Lys419.

The protein belongs to the EPSP synthase family. As to quaternary structure, monomer.

The protein resides in the cytoplasm. It carries out the reaction 3-phosphoshikimate + phosphoenolpyruvate = 5-O-(1-carboxyvinyl)-3-phosphoshikimate + phosphate. The protein operates within metabolic intermediate biosynthesis; chorismate biosynthesis; chorismate from D-erythrose 4-phosphate and phosphoenolpyruvate: step 6/7. Its function is as follows. Catalyzes the transfer of the enolpyruvyl moiety of phosphoenolpyruvate (PEP) to the 5-hydroxyl of shikimate-3-phosphate (S3P) to produce enolpyruvyl shikimate-3-phosphate and inorganic phosphate. The sequence is that of 3-phosphoshikimate 1-carboxyvinyltransferase from Burkholderia lata (strain ATCC 17760 / DSM 23089 / LMG 22485 / NCIMB 9086 / R18194 / 383).